Here is a 525-residue protein sequence, read N- to C-terminus: Eukaryotic translation initiation factor 3 subunit E (525 aa).

Positions 102–120 are enriched in basic and acidic residues; sequence QKELKEQQKEQQKEKDTDK. The tract at residues 102–143 is disordered; it reads QKELKEQQKEQQKEKDTDKTTPTTTDETTTTTTTAPTTTTTT. Positions 121-143 are enriched in low complexity; it reads TTPTTTDETTTTTTTAPTTTTTT. A PCI domain is found at 261 to 440; that stretch reads VYFYNPESRS…NQIKMFTQHN (180 aa). Residues 463–525 form a disordered region; that stretch reads INESRSQQNR…TTTTATPTSA (63 aa). The span at 482–525 shows a compositional bias: low complexity; it reads RGQNRNQQNQQNQQSNESNETTTTTTTAAAATTTTTTTATPTSA.

It belongs to the eIF-3 subunit E family. Component of the eukaryotic translation initiation factor 3 (eIF-3) complex.

The protein resides in the cytoplasm. Functionally, component of the eukaryotic translation initiation factor 3 (eIF-3) complex, which is involved in protein synthesis of a specialized repertoire of mRNAs and, together with other initiation factors, stimulates binding of mRNA and methionyl-tRNAi to the 40S ribosome. The eIF-3 complex specifically targets and initiates translation of a subset of mRNAs involved in cell proliferation. This Dictyostelium discoideum (Social amoeba) protein is Eukaryotic translation initiation factor 3 subunit E (eif3E).